The following is a 205-amino-acid chain: High frequency lysogenization protein HflD homolog (205 aa).

Belongs to the HflD family.

The protein resides in the cytoplasm. It is found in the cell inner membrane. This Hahella chejuensis (strain KCTC 2396) protein is High frequency lysogenization protein HflD homolog.